Reading from the N-terminus, the 262-residue chain is DNA-directed RNA polymerase subunit Rpo3 (262 aa).

This sequence belongs to the archaeal Rpo3/eukaryotic RPB3 RNA polymerase subunit family. As to quaternary structure, part of the RNA polymerase complex.

It localises to the cytoplasm. The enzyme catalyses RNA(n) + a ribonucleoside 5'-triphosphate = RNA(n+1) + diphosphate. DNA-dependent RNA polymerase (RNAP) catalyzes the transcription of DNA into RNA using the four ribonucleoside triphosphates as substrates. This Pyrobaculum neutrophilum (strain DSM 2338 / JCM 9278 / NBRC 100436 / V24Sta) (Thermoproteus neutrophilus) protein is DNA-directed RNA polymerase subunit Rpo3.